Reading from the N-terminus, the 136-residue chain is UPF0310 protein SMU_442 (136 aa).

The protein belongs to the UPF0310 family.

This is UPF0310 protein SMU_442 from Streptococcus mutans serotype c (strain ATCC 700610 / UA159).